The sequence spans 415 residues: Gamma-glutamyl phosphate reductase (415 aa).

Belongs to the gamma-glutamyl phosphate reductase family.

It is found in the cytoplasm. It catalyses the reaction L-glutamate 5-semialdehyde + phosphate + NADP(+) = L-glutamyl 5-phosphate + NADPH + H(+). Its pathway is amino-acid biosynthesis; L-proline biosynthesis; L-glutamate 5-semialdehyde from L-glutamate: step 2/2. Its function is as follows. Catalyzes the NADPH-dependent reduction of L-glutamate 5-phosphate into L-glutamate 5-semialdehyde and phosphate. The product spontaneously undergoes cyclization to form 1-pyrroline-5-carboxylate. This is Gamma-glutamyl phosphate reductase from Bacteroides fragilis (strain YCH46).